The sequence spans 505 residues: MTDKYIMAIDEGTTSTRAIIFDHAGHKVADSQREFPQYFPQPGWVEHNANEIWNAVLSTIANAFIESGIKPAQISGIGITNQRETTIVWDKQTGLPIYNAIVWQSRQTAPIAEKLVKDGYGDLIHQHTGLVTDAYFSATKIRWILDHVKGAQERAEKGELLFGTIDTWLLWKLTGGATHVTDYSNASRTMLFNIHDLKWDDQILQLLNIPAAMLPEVRTNSEVYGKTKDYHFFGSEVPISGMAGDQQAALFGQLAFEPGTVKNTYGTGAFIVMNTGEKPQLSDNNLLTTIGYGINGKVYYALEGSIFVAGSAIQWLRDGIRLVESAPDSERAARESHNENEVYVVPAFTGLGAPYWDSEARGSVFGLTRGTTREDFIKATLQALAYQTRDVVETMKKDSGIEIPVLKVDGGAARNDWLMQFQADILDTQIMRAANLETTALGAAFLAGLSVGYWQDLEELKASYKPGTSFDPEMGPAERTNLYEGWQAAVKATQVFKHTPYHAGK.

Threonine 13 contacts ADP. ATP is bound by residues threonine 13, threonine 14, and serine 15. Position 13 (threonine 13) interacts with sn-glycerol 3-phosphate. Residue arginine 17 coordinates ADP. Sn-glycerol 3-phosphate-binding residues include arginine 83, glutamate 84, and tyrosine 135. Glycerol contacts are provided by arginine 83, glutamate 84, and tyrosine 135. Phosphohistidine; by HPr is present on histidine 231. Aspartate 245 is a sn-glycerol 3-phosphate binding site. Glycerol is bound by residues aspartate 245 and glutamine 246. Residues threonine 267 and glycine 310 each contribute to the ADP site. ATP contacts are provided by threonine 267, glycine 310, glutamine 314, and glycine 411. Glycine 411 and asparagine 415 together coordinate ADP.

It belongs to the FGGY kinase family. In terms of assembly, homotetramer and homodimer (in equilibrium). The phosphoenolpyruvate-dependent sugar phosphotransferase system (PTS), including enzyme I, and histidine-containing protein (HPr) are required for the phosphorylation, which leads to the activation of the enzyme.

It carries out the reaction glycerol + ATP = sn-glycerol 3-phosphate + ADP + H(+). It functions in the pathway polyol metabolism; glycerol degradation via glycerol kinase pathway; sn-glycerol 3-phosphate from glycerol: step 1/1. With respect to regulation, activated by phosphorylation and inhibited by fructose 1,6-bisphosphate (FBP). Functionally, key enzyme in the regulation of glycerol uptake and metabolism. Catalyzes the phosphorylation of glycerol to yield sn-glycerol 3-phosphate. The chain is Glycerol kinase 1 from Lactiplantibacillus plantarum (strain ATCC BAA-793 / NCIMB 8826 / WCFS1) (Lactobacillus plantarum).